The following is a 165-amino-acid chain: Small ribosomal subunit protein eS10 (165 aa).

The tract at residues Ala92–Gln165 is disordered. Residues Ser97–Arg128 are compositionally biased toward basic and acidic residues. Residues Ala142 to Arg153 show a composition bias toward low complexity. Gly residues predominate over residues Gly154–Gln165.

The protein belongs to the eukaryotic ribosomal protein eS10 family. As to quaternary structure, component of the small ribosomal subunit.

The protein localises to the cytoplasm. It is found in the nucleus. Its subcellular location is the nucleolus. Functionally, component of the 40S ribosomal subunit. The ribosome is a large ribonucleoprotein complex responsible for the synthesis of proteins in the cell. This Xenopus laevis (African clawed frog) protein is Small ribosomal subunit protein eS10 (rps10).